Reading from the N-terminus, the 225-residue chain is 7-cyano-7-deazaguanine synthase (225 aa).

Residue L7–L17 participates in ATP binding. C183, C191, C194, and C197 together coordinate Zn(2+).

It belongs to the QueC family. Homodimer. Requires Zn(2+) as cofactor.

It carries out the reaction 7-carboxy-7-deazaguanine + NH4(+) + ATP = 7-cyano-7-deazaguanine + ADP + phosphate + H2O + H(+). It functions in the pathway purine metabolism; 7-cyano-7-deazaguanine biosynthesis. Its function is as follows. Catalyzes the ATP-dependent conversion of 7-carboxy-7-deazaguanine (CDG) to 7-cyano-7-deazaguanine (preQ(0)). The polypeptide is 7-cyano-7-deazaguanine synthase (Caldicellulosiruptor saccharolyticus (strain ATCC 43494 / DSM 8903 / Tp8T 6331)).